Reading from the N-terminus, the 120-residue chain is MARIAGVNIPNHQHIWVGLQAIYGIGATRAKVICSAAGIEISTKVKDLTDAEMEKLRDEIAKFTIEGDLRREVTMNIKRLMDLGCYRGFRHRRGLPCRGQRTRTNARTRKGPRKPIAGKK.

Residues 92 to 120 (RRGLPCRGQRTRTNARTRKGPRKPIAGKK) form a disordered region.

This sequence belongs to the universal ribosomal protein uS13 family. In terms of assembly, part of the 30S ribosomal subunit. Forms a loose heterodimer with protein S19. Forms two bridges to the 50S subunit in the 70S ribosome.

Its function is as follows. Located at the top of the head of the 30S subunit, it contacts several helices of the 16S rRNA. In the 70S ribosome it contacts the 23S rRNA (bridge B1a) and protein L5 of the 50S subunit (bridge B1b), connecting the 2 subunits; these bridges are implicated in subunit movement. Contacts the tRNAs in the A and P-sites. This chain is Small ribosomal subunit protein uS13, found in Laribacter hongkongensis (strain HLHK9).